The chain runs to 188 residues: GTP cyclohydrolase 1 (188 aa).

Residues cysteine 78, histidine 81, and cysteine 150 each coordinate Zn(2+).

This sequence belongs to the GTP cyclohydrolase I family. As to quaternary structure, toroid-shaped homodecamer, composed of two pentamers of five dimers.

It carries out the reaction GTP + H2O = 7,8-dihydroneopterin 3'-triphosphate + formate + H(+). It participates in cofactor biosynthesis; 7,8-dihydroneopterin triphosphate biosynthesis; 7,8-dihydroneopterin triphosphate from GTP: step 1/1. This chain is GTP cyclohydrolase 1, found in Halalkalibacterium halodurans (strain ATCC BAA-125 / DSM 18197 / FERM 7344 / JCM 9153 / C-125) (Bacillus halodurans).